Consider the following 138-residue polypeptide: Large-conductance mechanosensitive channel (138 aa).

2 helical membrane passes run 10–30 and 76–96; these read FAMR…AAFG and GSFI…FLAI.

Belongs to the MscL family. In terms of assembly, homopentamer.

It localises to the cell inner membrane. Functionally, channel that opens in response to stretch forces in the membrane lipid bilayer. May participate in the regulation of osmotic pressure changes within the cell. The protein is Large-conductance mechanosensitive channel of Serratia proteamaculans (strain 568).